We begin with the raw amino-acid sequence, 96 residues long: Protein Vpr (96 aa).

The tract at residues 1–42 (MEQAPEDQGPQREPYNEWTLELLEELKSEAVRHFPRLWLHSL) is homooligomerization. 3 positions are modified to phosphoserine; by host: Ser79, Ser94, and Ser96.

This sequence belongs to the HIV-1 VPR protein family. In terms of assembly, homooligomer, may form homodimer. Interacts with p6-gag region of the Pr55 Gag precursor protein through a (Leu-X-X)4 motif near the C-terminus of the P6gag protein. Interacts with host UNG. May interact with host RAD23A/HHR23A. Interacts with host VPRBP/DCAF1, leading to hijack the CUL4A-RBX1-DDB1-DCAF1/VPRBP complex, mediating ubiquitination of host proteins such as TERT and ZGPAT and arrest of the cell cycle in G2 phase. In terms of processing, phosphorylated on several residues by host. These phosphorylations regulate VPR activity for the nuclear import of the HIV-1 pre-integration complex.

The protein localises to the virion. It localises to the host nucleus. Its subcellular location is the host extracellular space. Functionally, during virus replication, may deplete host UNG protein, and incude G2-M cell cycle arrest. Acts by targeting specific host proteins for degradation by the 26S proteasome, through association with the cellular CUL4A-DDB1 E3 ligase complex by direct interaction with host VPRPB/DCAF-1. Cell cycle arrest reportedly occurs within hours of infection and is not blocked by antiviral agents, suggesting that it is initiated by the VPR carried into the virion. Additionally, VPR induces apoptosis in a cell cycle dependent manner suggesting that these two effects are mechanistically linked. Detected in the serum and cerebrospinal fluid of AIDS patient, VPR may also induce cell death to bystander cells. In terms of biological role, during virus entry, plays a role in the transport of the viral pre-integration (PIC) complex to the host nucleus. This function is crucial for viral infection of non-dividing macrophages. May act directly at the nuclear pore complex, by binding nucleoporins phenylalanine-glycine (FG)-repeat regions. In Human immunodeficiency virus type 1 group M subtype B (isolate RF/HAT3) (HIV-1), this protein is Protein Vpr.